The primary structure comprises 452 residues: Neuromedin-K receptor (452 aa).

The Extracellular portion of the chain corresponds to 1–71 (MASVPRGENW…TNQFVQPSWR (71 aa)). Asn-9, Asn-23, Asn-40, and Asn-60 each carry an N-linked (GlcNAc...) asparagine glycan. A helical transmembrane segment spans residues 72–94 (IALWSLAYGLVVAVAVFGNLIVI). Over 95–104 (WIILAHKRMR) the chain is Cytoplasmic. A helical transmembrane segment spans residues 105 to 126 (TVTNYFLVNLAFSDASVAAFNT). At 127 to 146 (LINFIYGLHSEWYFGANYCR) the chain is on the extracellular side. Cys-145 and Cys-220 form a disulfide bridge. The chain crosses the membrane as a helical span at residues 147–168 (FQNFFPITAVFASIYSMTAIAV). Topologically, residues 169 to 188 (DRYMAIIDPLKPRLSATATK) are cytoplasmic. The helical transmembrane segment at 189–209 (IVIGSIWILAFLLAFPQCLYS) threads the bilayer. Residues 210-232 (KIKVMPGRTLCYVQWPEGPKQHF) lie on the Extracellular side of the membrane. A helical membrane pass occupies residues 233-257 (TYHIIVIILVYCFPLLIMGVTYTIV). Topologically, residues 258 to 286 (GITLWGGEIPGDTCDKYHEQLKAKRKVVK) are cytoplasmic. A helical transmembrane segment spans residues 287–308 (MMIIVVVTFAICWLPYHVYFIL). At 309-321 (TAIYQQLNRWKYI) the chain is on the extracellular side. A helical transmembrane segment spans residues 322–346 (QQVYLASFWLAMSSTMYNPIIYCCL). The Cytoplasmic segment spans residues 347 to 452 (NKRFRAGFKR…SPYTSVDEYS (106 aa)). Residue Cys-361 is the site of S-palmitoyl cysteine attachment. The interval 400–452 (FDPNDGDPTKSSRKKRAVPRDPSANGCSHRGSKSASTTSSFISSPYTSVDEYS) is disordered. Over residues 432 to 452 (KSASTTSSFISSPYTSVDEYS) the composition is skewed to low complexity.

Belongs to the G-protein coupled receptor 1 family. In terms of processing, the anchoring of this receptor to the plasma membrane is probably mediated by the palmitoylation of a cysteine residue.

The protein localises to the cell membrane. This is a receptor for the tachykinin neuropeptide neuromedin-K (neurokinin B). It is associated with G proteins that activate a phosphatidylinositol-calcium second messenger system. The rank order of affinity of this receptor to tachykinins is: neuromedin-K &gt; substance K &gt; substance P. This chain is Neuromedin-K receptor (Tacr3), found in Rattus norvegicus (Rat).